We begin with the raw amino-acid sequence, 381 residues long: Dual specificity protein phosphatase 6 (381 aa).

The Rhodanese domain occupies 30–148 (GNERLLLMDC…FQAEFSLHCE (119 aa)). The interval 176–203 (SSSDIESDLDRDPNSATDSDGSPLSNSQ) is disordered. The span at 189 to 203 (NSATDSDGSPLSNSQ) shows a compositional bias: polar residues. Residues 206 to 349 (FPVEILPFLY…LLDFERTLGL (144 aa)) form the Tyrosine-protein phosphatase domain. Cys293 acts as the Phosphocysteine intermediate in catalysis.

This sequence belongs to the protein-tyrosine phosphatase family. Non-receptor class dual specificity subfamily. In terms of assembly, interacts with MAPK1/ERK2. In terms of processing, ubiquitinated by the SCF(FBXO31) complex, leading to its proteasomal degradation. In terms of tissue distribution, expressed in keratinocytes (at protein level).

The protein localises to the cytoplasm. The catalysed reaction is O-phospho-L-tyrosyl-[protein] + H2O = L-tyrosyl-[protein] + phosphate. It catalyses the reaction O-phospho-L-seryl-[protein] + H2O = L-seryl-[protein] + phosphate. The enzyme catalyses O-phospho-L-threonyl-[protein] + H2O = L-threonyl-[protein] + phosphate. In terms of biological role, dual specificity protein phosphatase, which mediates dephosphorylation and inactivation of MAP kinases. Has a specificity for the ERK family. Plays an important role in alleviating chronic postoperative pain. Necessary for the normal dephosphorylation of the long-lasting phosphorylated forms of spinal MAPK1/3 and MAP kinase p38 induced by peripheral surgery, which drives the resolution of acute postoperative allodynia. Also important for dephosphorylation of MAPK1/3 in local wound tissue, which further contributes to resolution of acute pain. Promotes cell differentiation by regulating MAPK1/MAPK3 activity and regulating the expression of AP1 transcription factors. The sequence is that of Dual specificity protein phosphatase 6 (DUSP6) from Homo sapiens (Human).